A 555-amino-acid chain; its full sequence is CTP synthase (555 aa).

Residues 1–279 (MATNRAKSST…DNYIIRRLNL (279 aa)) form an amidoligase domain region. A CTP-binding site is contributed by Ser21. Ser21 contributes to the UTP binding site. ATP is bound by residues 22 to 27 (SLGKGL) and Asp79. Positions 79 and 153 each coordinate Mg(2+). CTP is bound by residues 160–162 (DIE), 200–205 (KTKPTQ), and Lys236. UTP contacts are provided by residues 200-205 (KTKPTQ) and Lys236. Residues 304–553 (TIGIVGKYID…VDAALKHQAG (250 aa)) form the Glutamine amidotransferase type-1 domain. Gly367 contributes to the L-glutamine binding site. The Nucleophile; for glutamine hydrolysis role is filled by Cys394. Residues 395–398 (LGLQ), Glu417, and Arg478 contribute to the L-glutamine site. Residues His526 and Glu528 contribute to the active site.

The protein belongs to the CTP synthase family. In terms of assembly, homotetramer.

The catalysed reaction is UTP + L-glutamine + ATP + H2O = CTP + L-glutamate + ADP + phosphate + 2 H(+). It catalyses the reaction L-glutamine + H2O = L-glutamate + NH4(+). It carries out the reaction UTP + NH4(+) + ATP = CTP + ADP + phosphate + 2 H(+). It functions in the pathway pyrimidine metabolism; CTP biosynthesis via de novo pathway; CTP from UDP: step 2/2. With respect to regulation, allosterically activated by GTP, when glutamine is the substrate; GTP has no effect on the reaction when ammonia is the substrate. The allosteric effector GTP functions by stabilizing the protein conformation that binds the tetrahedral intermediate(s) formed during glutamine hydrolysis. Inhibited by the product CTP, via allosteric rather than competitive inhibition. Catalyzes the ATP-dependent amination of UTP to CTP with either L-glutamine or ammonia as the source of nitrogen. Regulates intracellular CTP levels through interactions with the four ribonucleotide triphosphates. The protein is CTP synthase of Corynebacterium jeikeium (strain K411).